Here is a 103-residue protein sequence, read N- to C-terminus: MSGRGKGGKGLGKGGAKRHRKILRDNIQGITKPAIRRLARRGGVKRISGLIYEEVRAVLKSFLESVIRDSVTYTEHAKRKTVTSLDVVYALKRQGRTLYGFGG.

The segment covering 1-14 (MSGRGKGGKGLGKG) has biased composition (gly residues). A disordered region spans residues 1–20 (MSGRGKGGKGLGKGGAKRHR). Lys6 is subject to N6-acetyl-N6-methyllysine; alternate. 3 positions are modified to N6-acetyllysine; alternate: Lys6, Lys9, and Lys13. N6-methyllysine; alternate occurs at positions 6, 9, and 13. 2 positions are modified to N6-butyryllysine; alternate: Lys9 and Lys13. Lys13 bears the N6-acetyl-N6-methyllysine; alternate mark. Residue Lys17 is modified to N6-acetyllysine. The DNA-binding element occupies 17 to 21 (KRHRK). Lys32 carries the post-translational modification N6-succinyllysine. Arg56 is modified (omega-N-methylarginine). 2 positions are modified to phosphoserine: Ser61 and Ser65. Lys78 bears the N6-succinyllysine mark. Lys80 is subject to N6-acetyllysine. Lys92 bears the N6-glutaryllysine mark.

Belongs to the histone H4 family. As to quaternary structure, the nucleosome is a histone octamer containing two molecules each of H2A, H2B, H3 and H4 assembled in one H3-H4 heterotetramer and two H2A-H2B heterodimers. The octamer wraps approximately 147 bp of DNA. Histone H4 is a component of the UAF (upstream activation factor) complex which consists of UAF30, RRN5, RRN9, RRN10, and histones H3 and H4. In terms of processing, glutarylation at Lys-92 (H4K91glu) destabilizes nucleosomes by promoting dissociation of the H2A-H2B dimers from nucleosomes.

Its subcellular location is the nucleus. It is found in the chromosome. Its function is as follows. Core component of nucleosome. Nucleosomes wrap and compact DNA into chromatin, limiting DNA accessibility to the cellular machineries which require DNA as a template. Histones thereby play a central role in transcription regulation, DNA repair, DNA replication and chromosomal stability. DNA accessibility is regulated via a complex set of post-translational modifications of histones, also called histone code, and nucleosome remodeling. Component of the UAF (upstream activation factor) complex which interacts with the upstream element of the RNA polymerase I promoter and forms a stable preinitiation complex. Together with SPT15/TBP UAF seems to stimulate basal transcription to a fully activated level. The sequence is that of Histone H4 (HHF1) from Saccharomyces cerevisiae (strain ATCC 204508 / S288c) (Baker's yeast).